Consider the following 125-residue polypeptide: Large ribosomal subunit protein bL20 (125 aa).

Belongs to the bacterial ribosomal protein bL20 family.

Its function is as follows. Binds directly to 23S ribosomal RNA and is necessary for the in vitro assembly process of the 50S ribosomal subunit. It is not involved in the protein synthesizing functions of that subunit. The sequence is that of Large ribosomal subunit protein bL20 from Methylobacterium sp. (strain 4-46).